The sequence spans 338 residues: 1-aminocyclopropane-1-carboxylate deaminase (338 aa).

Lys51 is modified (N6-(pyridoxal phosphate)lysine). Catalysis depends on Ser78, which acts as the Nucleophile.

The protein belongs to the ACC deaminase/D-cysteine desulfhydrase family. As to quaternary structure, homotrimer. Requires pyridoxal 5'-phosphate as cofactor.

The catalysed reaction is 1-aminocyclopropane-1-carboxylate + H2O = 2-oxobutanoate + NH4(+). Its function is as follows. Catalyzes a cyclopropane ring-opening reaction, the irreversible conversion of 1-aminocyclopropane-1-carboxylate (ACC) to ammonia and alpha-ketobutyrate. Allows growth on ACC as a nitrogen source. The sequence is that of 1-aminocyclopropane-1-carboxylate deaminase from Paraburkholderia xenovorans (strain LB400).